Consider the following 208-residue polypeptide: dITP/XTP pyrophosphatase (208 aa).

11 to 16 (TGNAKK) serves as a coordination point for substrate. D73 serves as the catalytic Proton acceptor. D73 contributes to the Mg(2+) binding site. Residues S74, 157–160 (FGYD), K180, and 185–186 (HR) contribute to the substrate site.

This sequence belongs to the HAM1 NTPase family. Homodimer. Mg(2+) is required as a cofactor.

The enzyme catalyses XTP + H2O = XMP + diphosphate + H(+). It carries out the reaction dITP + H2O = dIMP + diphosphate + H(+). The catalysed reaction is ITP + H2O = IMP + diphosphate + H(+). Its function is as follows. Pyrophosphatase that catalyzes the hydrolysis of nucleoside triphosphates to their monophosphate derivatives, with a high preference for the non-canonical purine nucleotides XTP (xanthosine triphosphate), dITP (deoxyinosine triphosphate) and ITP. Seems to function as a house-cleaning enzyme that removes non-canonical purine nucleotides from the nucleotide pool, thus preventing their incorporation into DNA/RNA and avoiding chromosomal lesions. This chain is dITP/XTP pyrophosphatase, found in Rhodopirellula baltica (strain DSM 10527 / NCIMB 13988 / SH1).